Reading from the N-terminus, the 78-residue chain is Translation initiation factor IF-1, chloroplastic (78 aa).

In terms of domain architecture, S1-like spans 1 to 72; the sequence is MKKQNLIDME…TKGRITYRLR (72 aa).

This sequence belongs to the IF-1 family. Component of the 30S ribosomal translation pre-initiation complex which assembles on the 30S ribosome in the order IF-2 and IF-3, IF-1 and N-formylmethionyl-tRNA(fMet); mRNA recruitment can occur at any time during PIC assembly.

It localises to the plastid. It is found in the chloroplast. One of the essential components for the initiation of protein synthesis. Stabilizes the binding of IF-2 and IF-3 on the 30S subunit to which N-formylmethionyl-tRNA(fMet) subsequently binds. Helps modulate mRNA selection, yielding the 30S pre-initiation complex (PIC). Upon addition of the 50S ribosomal subunit IF-1, IF-2 and IF-3 are released leaving the mature 70S translation initiation complex. This is Translation initiation factor IF-1, chloroplastic from Physcomitrium patens (Spreading-leaved earth moss).